Reading from the N-terminus, the 397-residue chain is Arginine biosynthesis bifunctional protein ArgJ (397 aa).

Residues threonine 147, lysine 173, threonine 184, glutamate 270, asparagine 392, and threonine 397 each coordinate substrate. Threonine 184 serves as the catalytic Nucleophile.

The protein belongs to the ArgJ family. Heterotetramer of two alpha and two beta chains.

The protein resides in the cytoplasm. It carries out the reaction N(2)-acetyl-L-ornithine + L-glutamate = N-acetyl-L-glutamate + L-ornithine. The catalysed reaction is L-glutamate + acetyl-CoA = N-acetyl-L-glutamate + CoA + H(+). The protein operates within amino-acid biosynthesis; L-arginine biosynthesis; L-ornithine and N-acetyl-L-glutamate from L-glutamate and N(2)-acetyl-L-ornithine (cyclic): step 1/1. It functions in the pathway amino-acid biosynthesis; L-arginine biosynthesis; N(2)-acetyl-L-ornithine from L-glutamate: step 1/4. Its function is as follows. Catalyzes two activities which are involved in the cyclic version of arginine biosynthesis: the synthesis of N-acetylglutamate from glutamate and acetyl-CoA as the acetyl donor, and of ornithine by transacetylation between N(2)-acetylornithine and glutamate. The protein is Arginine biosynthesis bifunctional protein ArgJ of Staphylococcus epidermidis (strain ATCC 35984 / DSM 28319 / BCRC 17069 / CCUG 31568 / BM 3577 / RP62A).